Here is a 1043-residue protein sequence, read N- to C-terminus: Probable inorganic carbon transporter subunit DabA (1043 aa).

Zn(2+) is bound by residues Cys-460, Asp-462, His-719, and Cys-734.

The protein belongs to the inorganic carbon transporter (TC 9.A.2) DabA family. As to quaternary structure, forms a complex with DabB. It depends on Zn(2+) as a cofactor.

The protein resides in the cell inner membrane. Its function is as follows. Part of an energy-coupled inorganic carbon pump. This Thiobacillus denitrificans (strain ATCC 25259 / T1) protein is Probable inorganic carbon transporter subunit DabA.